Here is a 222-residue protein sequence, read N- to C-terminus: Formimidoylglutamase (222 aa).

Mn(2+)-binding residues include histidine 34, aspartate 59, histidine 61, aspartate 63, aspartate 150, and aspartate 152.

The protein belongs to the arginase family. Mn(2+) serves as cofactor.

It carries out the reaction N-formimidoyl-L-glutamate + H2O = formamide + L-glutamate. It functions in the pathway amino-acid degradation; L-histidine degradation into L-glutamate; L-glutamate from N-formimidoyl-L-glutamate (hydrolase route): step 1/1. Functionally, catalyzes the conversion of N-formimidoyl-L-glutamate to L-glutamate and formamide. This chain is Formimidoylglutamase (hutG), found in Klebsiella aerogenes (Enterobacter aerogenes).